A 941-amino-acid polypeptide reads, in one-letter code: MQLFQNILVSIALLTQIVFAIEITENKVDRGTVTLNLSDITIYPGASWSIIDNAYTSFVGKLDVRDGAGLYISSTSHLLALQVSLTALLHSITNNGVVSFDSRISRTSSSYDLRGVSFTNNGEMYFAASGEFSSPTALTSASWTNTGLLSFYQNQRTSGTVSLGMPLGSITNTGQVCLNNQVYEQTTQIKGSGCFTANGDSTIYISNVLLAVSPKQNFYLTDKGSSMIVQAVSTTQTFNVYGFGEGNKIGLTIPLMGNLWNSAYAYDTTSGILTLRNLLLEQKFNIGTGYDPSKFQVVTDSGSGIPSTILGSVAYYGRVPERTLPKSCQIPCKPIPEAPGTTPTQYTTTITKTNTAGNTVTESGVVNVSTDKGGSWFTTTSMFPALSTAPSTATVFSSDTIMSTVEPDTTELASLTDIPIETSSVEELLSVMSNWEISSAPTLSIETPVSSHHSSMQHSSFESSADINTVFSSESAFETASDYIVSTPSSISHSTMVPQSSVSALSVVSESLASAEPSFVVPSESFIFSASSAAPQPSSSTYSVSFTTQFETPSSAGPSLVTSVESNTELISSATQSSDIQTEFTSTWTTTNSDGSVVTESGIISQSGTSLTTLTTFQPATSLVVPPYSVIETEFTSTWTTTNSDSSVATESGVVSQSDTLLTTVTTFPPAPSAIVPEFTSPWKINTSIESSETLTVSASSYETVGESLAAATSSYLSSATVVVAPSESEINTSSSILNNEEIASAPVSDTTSIAEHHDGSLSMTTTEFVNSNSLPSSHSIVTATITSCNKSKCSESVVTYVSSVSCATITVGDSEKNISTVGNNVSSIVGDDVSNTQAITMATSTEGATTLTSVSGAKPSVANDATNSVHTTDYTTATTGVQNGSSLSIPSDIPIEISVITPTNSSSSAITIPYENGSNKESIENIKYLALVVFGLMMFM.

The first 20 residues, 1–20 (MQLFQNILVSIALLTQIVFA), serve as a signal peptide directing secretion. Residue Asn917 is the site of GPI-anchor amidated asparagine attachment. Positions 918-941 (GSNKESIENIKYLALVVFGLMMFM) are cleaved as a propeptide — removed in mature form.

This sequence belongs to the HYR1/IFF family. The GPI-anchor is attached to the protein in the endoplasmic reticulum and serves to target the protein to the cell surface. There, the glucosamine-inositol phospholipid moiety is cleaved off and the GPI-modified mannoprotein is covalently attached via its lipidless GPI glycan remnant to the 1,6-beta-glucan of the outer cell wall layer.

It is found in the secreted. The protein localises to the cell wall. Its subcellular location is the membrane. In terms of biological role, GPI-anchored cell wall protein involved in cell wall organization, hyphal growth, as well as in host-fungal interaction and virulence. This Candida albicans (strain SC5314 / ATCC MYA-2876) (Yeast) protein is Cell wall protein IFF9 (IFF9).